Reading from the N-terminus, the 357-residue chain is G-protein coupled receptor 183 (357 aa).

The Extracellular segment spans residues 1–32 (MANNFTTPLAASHGNNCDLYAHHSTARILMPL). Asn4 is a glycosylation site (N-linked (GlcNAc...) asparagine). The helical transmembrane segment at 33–53 (HYSLVFIIGLVGNLLALVVIV) threads the bilayer. Over 54-68 (QNRKKINSTTLYSMN) the chain is Cytoplasmic. The chain crosses the membrane as a helical span at residues 69–89 (LVISDILFTTALPTRIVYYAL). Residue Arg83 participates in 7alpha,25-dihydroxycholesterol binding. The Extracellular portion of the chain corresponds to 90–101 (GFDWRIGDALCR). Cys100 and Cys177 are disulfide-bonded. A helical membrane pass occupies residues 102 to 122 (ITALLFYINTYAGVNFMTCLS). 7alpha,25-dihydroxycholesterol is bound by residues Tyr108 and Tyr112. Residues 122–130 (SIDRFFAVV) are interaction with G proteins. Topologically, residues 123 to 143 (IDRFFAVVHPLRYNKIKRIEY) are cytoplasmic. A helical transmembrane segment spans residues 144 to 164 (AKGICVFVWILVFAQTLPLLL). The Extracellular segment spans residues 165–190 (KPMSKQEADKTTCMEYPNFEGTASLP). A helical transmembrane segment spans residues 191–211 (WILLGACLLGYVLPLAIILLC). Residues 212-240 (YSQICCKLFRTAKQNPLTEKSGVNKKALN) lie on the Cytoplasmic side of the membrane. The helical transmembrane segment at 241–261 (TIILIIGVFVLCFTPYHVAIM) threads the bilayer. Tyr256 contributes to the 7alpha,25-dihydroxycholesterol binding site. Over 262 to 287 (QHMVKTLYAPGALGCGVRHSFQISLH) the chain is Extracellular. The chain crosses the membrane as a helical span at residues 288–308 (FTVCLMNFNCCMDPFIYFFAC). Topologically, residues 309–357 (KGYKRKVMKMLKRQVSVSISSAVRSAPEENSREMTESQMMIHSKASNGR) are cytoplasmic. Residues Ser324 and Ser345 each carry the phosphoserine modification. The interval 336–357 (EENSREMTESQMMIHSKASNGR) is disordered. Residues 344 to 357 (ESQMMIHSKASNGR) show a composition bias toward polar residues.

This sequence belongs to the G-protein coupled receptor 1 family. Homodimer and heterodimer. Heterodimerizes with CXCR5; leading to modulate the interaction between of CXCL13 and CXCR5.

It is found in the cell membrane. G-protein coupled receptor expressed in lymphocytes that acts as a chemotactic receptor for B-cells, T-cells, splenic dendritic cells, monocytes/macrophages and astrocytes. Receptor for oxysterol 7-alpha,25-dihydroxycholesterol (7-alpha,25-OHC) and other related oxysterols. Mediates cell positioning and movement of a number of cells by binding the 7-alpha,25-OHC ligand that forms a chemotactic gradient. Binding of 7-alpha,25-OHC mediates the correct localization of B-cells during humoral immune responses. Guides B-cell movement along the B-cell zone-T-cell zone boundary and later to interfollicular and outer follicular regions. Its specific expression during B-cell maturation helps position B-cells appropriately for mounting T-dependent antibody responses. Collaborates with CXCR5 to mediate B-cell migration; probably by forming a heterodimer with CXCR5 that affects the interaction between of CXCL13 and CXCR5. Also acts as a chemotactic receptor for some T-cells upon binding to 7-alpha,25-OHC ligand. Promotes follicular helper T (Tfh) cells differentiation by positioning activated T-cells at the follicle-T-zone interface, promoting contact of newly activated CD4 T-cells with activated dendritic cells and exposing them to Tfh-cell-promoting inducible costimulator (ICOS) ligand. Expression in splenic dendritic cells is required for their homeostasis, localization and ability to induce B- and T-cell responses: GPR183 acts as a chemotactic receptor in dendritic cells that mediates the accumulation of CD4(+) dendritic cells in bridging channels. Regulates migration of astrocytes and is involved in communication between astrocytes and macrophages. Promotes osteoclast precursor migration to bone surfaces. Signals constitutively through G(i)-alpha, but not G(s)-alpha or G(q)-alpha. Signals constitutively also via MAPK1/3 (ERK1/2). This Rattus norvegicus (Rat) protein is G-protein coupled receptor 183 (Gpr183).